We begin with the raw amino-acid sequence, 201 residues long: Recombination protein RecR (201 aa).

The C4-type zinc-finger motif lies at 60–75 (CSCCGNVDTSDPCTIC). The region spanning 83-178 (ATLIVVEDVS…RVTRLAHGVP (96 aa)) is the Toprim domain.

Belongs to the RecR family.

May play a role in DNA repair. It seems to be involved in an RecBC-independent recombinational process of DNA repair. It may act with RecF and RecO. The polypeptide is Recombination protein RecR (Brucella melitensis biotype 1 (strain ATCC 23456 / CCUG 17765 / NCTC 10094 / 16M)).